We begin with the raw amino-acid sequence, 237 residues long: tRNA (guanine-N(7)-)-methyltransferase (237 aa).

4 residues coordinate S-adenosyl-L-methionine: Glu68, Glu93, Asp120, and Asp143. Asp143 is an active-site residue. Residues Lys147, Asp179, and 216-219 (TKFE) each bind substrate.

Belongs to the class I-like SAM-binding methyltransferase superfamily. TrmB family.

The catalysed reaction is guanosine(46) in tRNA + S-adenosyl-L-methionine = N(7)-methylguanosine(46) in tRNA + S-adenosyl-L-homocysteine. It participates in tRNA modification; N(7)-methylguanine-tRNA biosynthesis. Its function is as follows. Catalyzes the formation of N(7)-methylguanine at position 46 (m7G46) in tRNA. In Shewanella halifaxensis (strain HAW-EB4), this protein is tRNA (guanine-N(7)-)-methyltransferase.